The sequence spans 488 residues: N-succinylglutamate 5-semialdehyde dehydrogenase 2 (488 aa).

221–226 (GSSNTG) lines the NAD(+) pocket. Residues E244 and C278 contribute to the active site.

It belongs to the aldehyde dehydrogenase family. AstD subfamily.

It carries out the reaction N-succinyl-L-glutamate 5-semialdehyde + NAD(+) + H2O = N-succinyl-L-glutamate + NADH + 2 H(+). The protein operates within amino-acid degradation; L-arginine degradation via AST pathway; L-glutamate and succinate from L-arginine: step 4/5. Functionally, catalyzes the NAD-dependent reduction of succinylglutamate semialdehyde into succinylglutamate. The protein is N-succinylglutamate 5-semialdehyde dehydrogenase 2 of Pseudoalteromonas translucida (strain TAC 125).